A 64-amino-acid chain; its full sequence is Lantibiotic actagardine (64 aa).

Residues 1–45 constitute a propeptide that is removed on maturation; that stretch reads MSALAIEKSWKDVDLRDGATSHPAGLGFGELTFEDLREDRTIYAA. Positions 46-51 form a cross-link, lanthionine (Ser-Cys); it reads SSGWVC. 2 cross-links (beta-methyllanthionine (Thr-Cys)) span residues 52–57 and 54–62; these read TLTIEC and TIECGTVIC. Positions 59-64 form a cross-link, beta-methyllanthionine sulfoxide (Thr-Cys); sequence TVICAC.

Belongs to the type B lantibiotic family. Post-translationally, maturation of lantibiotics involves the enzymatic conversion of Thr, and Ser into dehydrated AA by the enzyme garM and the formation of thioether bonds with cysteine. The 59-64 beta-methyllanthionine thioether bond is oxidized to a sulfoxide by the monooxygenase GarO. This is followed by membrane translocation and cleavage of the modified precursor. The sulfoxide group of the 59-64 beta-methyllanthionine thioether bond is mildly important for activity, since the antibacterial activity of deoxyactagardine is marginally lower compared with oxidized actagardine.

Has potent antibacterial activity against some Gram-positive bacteria. Has good antistreptococcal activity. Inhibits cell wall biosynthesis by binding to lipid II and blocking transglycosylation. This chain is Lantibiotic actagardine, found in Actinoplanes garbadinensis.